Reading from the N-terminus, the 170-residue chain is Tubulin polymerization-promoting protein family member 2 (170 aa).

Positions Thr127 to Glu147 are disordered. Over residues Thr129–Lys139 the composition is skewed to basic and acidic residues.

The protein belongs to the TPPP family.

Its subcellular location is the cytoplasm. It is found in the cytosol. It localises to the cell projection. The protein resides in the cilium. The protein localises to the flagellum. Probable regulator of microtubule dynamics required for sperm motility. In contrast to other members of the family, has no microtubule bundling activity. In Macaca fascicularis (Crab-eating macaque), this protein is Tubulin polymerization-promoting protein family member 2 (TPPP2).